The sequence spans 242 residues: Polycomb group RING finger protein 3 (242 aa).

The segment at 17–56 adopts an RING-type zinc-finger fold; that stretch reads CRLCSGYLIDATTVTECLHTFCRSCLVKYLEENNTCPTCR. The disordered stretch occupies residues 115–149; it reads AKQHLDPHRNGETKADDSSNKEAAEEKQEEDGDYH. Over residues 117 to 140 the composition is skewed to basic and acidic residues; that stretch reads QHLDPHRNGETKADDSSNKEAAEE. The tract at residues 132–242 is interaction with BCORL1; the sequence is SSNKEAAEEK…LHYRPKMDLL (111 aa).

In terms of assembly, component of a PRC1-like complex that contains PCGF3, RNF2 and RYBP. Interacts with CBX6, CBX7 and CBX8. Interacts with BCORL1.

It localises to the nucleus. The protein localises to the nucleoplasm. Component of a Polycomb group (PcG) multiprotein PRC1-like complex, a complex class required to maintain the transcriptionally repressive state of many genes, including Hox genes, throughout development. PcG PRC1 complex acts via chromatin remodeling and modification of histones; it mediates monoubiquitination of histone H2A 'Lys-119', rendering chromatin heritably changed in its expressibility. Within the PRC1-like complex, regulates RNF2 ubiquitin ligase activity. Plays a redundant role with PCGF5 as part of a PRC1-like complex that mediates monoubiquitination of histone H2A 'Lys-119' on the X chromosome and is required for normal silencing of one copy of the X chromosome in XX females. In Bos taurus (Bovine), this protein is Polycomb group RING finger protein 3 (PCGF3).